Reading from the N-terminus, the 382-residue chain is Proton extrusion protein PxcA (382 aa).

Transmembrane regions (helical) follow at residues 162 to 182 (VLLL…TYLI), 257 to 277 (AIKN…VCLM), 305 to 325 (IILF…SVLL), and 340 to 360 (FVNL…KYWI).

Belongs to the CemA family.

It localises to the cell inner membrane. In terms of biological role, required for H(+) efflux immediately after light irradiation to form a rapid H(+) concentration gradient across the thylakoid membranes. Together with PxcL, contributes to transient H(+) uptake following dark to light transition. The polypeptide is Proton extrusion protein PxcA (Synechococcus sp. (strain CC9605)).